A 117-amino-acid chain; its full sequence is Large ribosomal subunit protein eL18 (117 aa).

It belongs to the eukaryotic ribosomal protein eL18 family.

This is Large ribosomal subunit protein eL18 from Halobacterium salinarum (strain ATCC 29341 / DSM 671 / R1).